The following is a 276-amino-acid chain: Protease HtpX homolog (276 aa).

A helical membrane pass occupies residues 16-36 (LFIWFGGMIAGQTGMVIAFLV). Histidine 130 is a binding site for Zn(2+). Glutamate 131 is an active-site residue. Histidine 134 is a Zn(2+) binding site. 2 helical membrane passes run 142 to 162 (IGTV…FGMF) and 173 to 193 (IFVM…IQMT). Glutamate 199 is a binding site for Zn(2+).

Belongs to the peptidase M48B family. Requires Zn(2+) as cofactor.

Its subcellular location is the cell inner membrane. In Sulfurovum sp. (strain NBC37-1), this protein is Protease HtpX homolog.